A 205-amino-acid polypeptide reads, in one-letter code: MSGAQRGQRGGERRGGRDDRRGQGADKTAYIERVVAINRVAKVVKGGRRFSFTALVVVGDGEGLVGVGYGKAKEVPAAIAKGVEEAKKHFFRVPRIQGTIPHPVQGEKAAGVVLLRPAAPGTGVIAGGPVRAVLECAGIHDVLSKSLGSSNQINIVHATVEALRMLEQPEAVAARRGLPVEEVAPAALLKARVEVPAGVSEEVSS.

The disordered stretch occupies residues 1-25 (MSGAQRGQRGGERRGGRDDRRGQGA). The segment covering 9–24 (RGGERRGGRDDRRGQG) has biased composition (basic and acidic residues). The 64-residue stretch at 30–93 (YIERVVAINR…EEAKKHFFRV (64 aa)) folds into the S5 DRBM domain.

It belongs to the universal ribosomal protein uS5 family. Part of the 30S ribosomal subunit. Contacts proteins S4 and S8.

Functionally, with S4 and S12 plays an important role in translational accuracy. In terms of biological role, located at the back of the 30S subunit body where it stabilizes the conformation of the head with respect to the body. In Nocardioides sp. (strain ATCC BAA-499 / JS614), this protein is Small ribosomal subunit protein uS5.